The following is a 173-amino-acid chain: Putative metal-dependent hydrolase BcerKBAB4_2443 (173 aa).

Residues His65, His156, and His160 each contribute to the Zn(2+) site.

It belongs to the metal hydrolase YfiT family. Homodimer. The cofactor is Zn(2+).

The protein resides in the cytoplasm. In terms of biological role, possible metal-dependent hydrolase. This is Putative metal-dependent hydrolase BcerKBAB4_2443 from Bacillus mycoides (strain KBAB4) (Bacillus weihenstephanensis).